A 425-amino-acid chain; its full sequence is Na(+)/H(+) antiporter NhaA 1 (425 aa).

11 helical membrane passes run 20–40, 65–85, 102–122, 131–151, 160–180, 183–203, 218–238, 272–292, 303–323, 342–362, and 373–393; these read AGGV…NSPL, PHLW…GLEI, LPFI…LAVT, GWAI…ALLG, LFLT…IALA, ASIK…MMAM, FVLL…AGVL, FLIV…GFSL, IAAG…WAAV, LSVL…LAFA, and LGVI…LRFA.

The protein belongs to the NhaA Na(+)/H(+) (TC 2.A.33) antiporter family.

It localises to the cell inner membrane. The catalysed reaction is Na(+)(in) + 2 H(+)(out) = Na(+)(out) + 2 H(+)(in). Na(+)/H(+) antiporter that extrudes sodium in exchange for external protons. The chain is Na(+)/H(+) antiporter NhaA 1 from Novosphingobium aromaticivorans (strain ATCC 700278 / DSM 12444 / CCUG 56034 / CIP 105152 / NBRC 16084 / F199).